Here is an 81-residue protein sequence, read N- to C-terminus: Translational regulator CsrA (81 aa).

This sequence belongs to the CsrA/RsmA family. Homodimer; the beta-strands of each monomer intercalate to form a hydrophobic core, while the alpha-helices form wings that extend away from the core.

It is found in the cytoplasm. Functionally, a translational regulator that binds mRNA to regulate translation initiation and/or mRNA stability. Usually binds in the 5'-UTR at or near the Shine-Dalgarno sequence preventing ribosome-binding, thus repressing translation. Its main target seems to be the major flagellin gene, while its function is anatagonized by FliW. In Halothermothrix orenii (strain H 168 / OCM 544 / DSM 9562), this protein is Translational regulator CsrA.